Consider the following 287-residue polypeptide: ATP phosphoribosyltransferase (287 aa).

Belongs to the ATP phosphoribosyltransferase family. Long subfamily. The cofactor is Mg(2+).

The protein resides in the cytoplasm. It catalyses the reaction 1-(5-phospho-beta-D-ribosyl)-ATP + diphosphate = 5-phospho-alpha-D-ribose 1-diphosphate + ATP. Its pathway is amino-acid biosynthesis; L-histidine biosynthesis; L-histidine from 5-phospho-alpha-D-ribose 1-diphosphate: step 1/9. With respect to regulation, feedback inhibited by histidine. Its function is as follows. Catalyzes the condensation of ATP and 5-phosphoribose 1-diphosphate to form N'-(5'-phosphoribosyl)-ATP (PR-ATP). Has a crucial role in the pathway because the rate of histidine biosynthesis seems to be controlled primarily by regulation of HisG enzymatic activity. The polypeptide is ATP phosphoribosyltransferase (hisG) (Methanothermobacter thermautotrophicus (strain ATCC 29096 / DSM 1053 / JCM 10044 / NBRC 100330 / Delta H) (Methanobacterium thermoautotrophicum)).